The following is a 430-amino-acid chain: Probable carboxypeptidase AO090003000058 (430 aa).

A signal peptide spans 1–16; sequence MKSIYSLVLCTALTAA. N-linked (GlcNAc...) asparagine glycosylation is present at asparagine 84. Residue aspartate 156 participates in Zn(2+) binding. The active-site Proton acceptor is glutamate 188. Glutamate 189 contacts Zn(2+). N-linked (GlcNAc...) asparagine glycosylation occurs at asparagine 285.

This sequence belongs to the peptidase M20A family. It depends on Zn(2+) as a cofactor.

The protein localises to the secreted. The chain is Probable carboxypeptidase AO090003000058 from Aspergillus oryzae (strain ATCC 42149 / RIB 40) (Yellow koji mold).